The primary structure comprises 243 residues: Sugar fermentation stimulation protein homolog (243 aa).

It belongs to the SfsA family.

This is Sugar fermentation stimulation protein homolog from Bdellovibrio bacteriovorus (strain ATCC 15356 / DSM 50701 / NCIMB 9529 / HD100).